A 247-amino-acid chain; its full sequence is Mast cell protease 2 (247 aa).

Positions 1–18 (MQALLFLMALLLPSGAGA) are cleaved as a signal peptide. The propeptide at 19 to 20 (EE) is activation peptide. Residues 21–244 (IIGGVESIPH…YVPWINAVIN (224 aa)) enclose the Peptidase S1 domain. Cysteine 50 and cysteine 66 are disulfide-bonded. Catalysis depends on charge relay system residues histidine 65 and aspartate 109. 2 disulfide bridges follow: cysteine 143/cysteine 208 and cysteine 174/cysteine 187. Residue serine 202 is the Charge relay system of the active site.

It belongs to the peptidase S1 family. Granzyme subfamily.

Its function is as follows. This enzyme, isolated from small intestine, specifically inactivates the apo forms of a certain group of intracellular pyridoxal phosphate-requiring enzymes. It has chymotrypsin-like specificity towards small substrates. The protein is Mast cell protease 2 (Mcpt2) of Rattus norvegicus (Rat).